The chain runs to 487 residues: NADH-quinone oxidoreductase subunit N (487 aa).

14 consecutive transmembrane segments (helical) span residues 12-32 (VLILPEILIALGIMALLLIGV), 40-60 (LTVTGLTIALLFATIILIVLF), 79-99 (YMKILTLIGALFSLILSVGFS), 104-124 (FDIFEFPILVLLATLGMMLMI), 129-149 (MLSLYMGLELQSLALYVLAAI), 164-184 (FVLGALSSGLLLYGISLLYGF), 201-221 (ILHLGVIFGIVFILAGLAFKI), 248-268 (APKIAAMALIIRVIVFAFIPL), 281-301 (ILIFMAISSMALGAFAAIGQT), 310-330 (SSIGHMGYALVGLAAGNILGV), 332-352 (GILIYMTIYLGMTIGSFAFIL), 378-398 (AIVMTIQLFSLASIPPMAGFF), 411-431 (GLVPLAIVGMVLSVIGAFYYL), and 455-475 (LCLCLSALFVLFYVFFGFWFS).

This sequence belongs to the complex I subunit 2 family. NDH-1 is composed of 14 different subunits. Subunits NuoA, H, J, K, L, M, N constitute the membrane sector of the complex.

Its subcellular location is the cell inner membrane. It catalyses the reaction a quinone + NADH + 5 H(+)(in) = a quinol + NAD(+) + 4 H(+)(out). Its function is as follows. NDH-1 shuttles electrons from NADH, via FMN and iron-sulfur (Fe-S) centers, to quinones in the respiratory chain. The immediate electron acceptor for the enzyme in this species is believed to be ubiquinone. Couples the redox reaction to proton translocation (for every two electrons transferred, four hydrogen ions are translocated across the cytoplasmic membrane), and thus conserves the redox energy in a proton gradient. In Bartonella bacilliformis (strain ATCC 35685 / KC583 / Herrer 020/F12,63), this protein is NADH-quinone oxidoreductase subunit N.